Reading from the N-terminus, the 253-residue chain is MANLPTVLVTGASGRTGQIVYKKLKEGSDKFVAKGLVRSAQGKEKIGGEADVFIGDITDADSINPAFQGIDALVILTSAVPKMKPGFDPTKGGRPEFIFEDGQYPEQVDWIGQKNQIDAAKVAGVKHIVVVGSMGGTNPDHPLNKLGNGNILVWKRKAEQYLADSGTPYTIIRAGGLLDKEGGVRELLVGKDDELLQTDTKTVPRADVAEVCIQALLFEEAKNKAFDLGSKPEGTSTPTKDFKALFSQVTSRF.

Ala-2 bears the N-acetylalanine mark.

Belongs to the NAD(P)-dependent epimerase/dehydratase family. As to quaternary structure, homodimer.

This is an uncharacterized protein from Arabidopsis thaliana (Mouse-ear cress).